We begin with the raw amino-acid sequence, 28 residues long: Potassium channel toxin alpha-KTx 9.5 (28 aa).

3 disulfides stabilise this stretch: cysteine 3–cysteine 19, cysteine 6–cysteine 24, and cysteine 10–cysteine 26. Position 28 is a valine amide (valine 28).

In terms of tissue distribution, expressed by the venom gland.

The protein resides in the secreted. Its function is as follows. Blocks voltage-gated potassium channels Kv1.1/KCNA1 (IC(50)=145 nM), Kv1.2/KCNA2 (IC(50)=2.5 nM), and Kv1.3/KCNA3 (IC(50)=15). Also inhibits calcium-activated potassium channels (KCa/KCNN). This Buthus occitanus tunetanus (Common European scorpion) protein is Potassium channel toxin alpha-KTx 9.5.